The primary structure comprises 578 residues: Membrane protein insertase YidC (578 aa).

Residues 3 to 23 (IQRSILIVALAVVSYLLVLQW) form a helical membrane-spanning segment. The segment at 34–71 (AASASMNTTQGLPDTPSAAGTSSDVPTAQSGAAGSEAA) is disordered. The span at 37–65 (ASMNTTQGLPDTPSAAGTSSDVPTAQSGA) shows a compositional bias: polar residues. Helical transmembrane passes span 361-381 (LELT…FWLL), 387-407 (LIGN…LAFF), 457-477 (LGGC…YWVL), 500-520 (PFFI…MLNP), and 535-555 (PIIF…YWVV).

This sequence belongs to the OXA1/ALB3/YidC family. Type 1 subfamily. In terms of assembly, interacts with the Sec translocase complex via SecD. Specifically interacts with transmembrane segments of nascent integral membrane proteins during membrane integration.

The protein localises to the cell inner membrane. Functionally, required for the insertion and/or proper folding and/or complex formation of integral membrane proteins into the membrane. Involved in integration of membrane proteins that insert both dependently and independently of the Sec translocase complex, as well as at least some lipoproteins. Aids folding of multispanning membrane proteins. The polypeptide is Membrane protein insertase YidC (Pseudomonas paraeruginosa (strain DSM 24068 / PA7) (Pseudomonas aeruginosa (strain PA7))).